A 200-amino-acid polypeptide reads, in one-letter code: Shikimate kinase (200 aa).

41–46 (GVGKSS) is an ATP binding site. Residue serine 45 participates in Mg(2+) binding. Substrate-binding residues include aspartate 63, arginine 87, and glycine 109. Arginine 147 contacts ATP. Arginine 166 serves as a coordination point for substrate.

This sequence belongs to the shikimate kinase family. Monomer. Mg(2+) serves as cofactor.

The protein localises to the cytoplasm. It carries out the reaction shikimate + ATP = 3-phosphoshikimate + ADP + H(+). The protein operates within metabolic intermediate biosynthesis; chorismate biosynthesis; chorismate from D-erythrose 4-phosphate and phosphoenolpyruvate: step 5/7. In terms of biological role, catalyzes the specific phosphorylation of the 3-hydroxyl group of shikimic acid using ATP as a cosubstrate. This Caulobacter vibrioides (strain NA1000 / CB15N) (Caulobacter crescentus) protein is Shikimate kinase.